The primary structure comprises 371 residues: tRNA (guanine(26)-N(2))-dimethyltransferase (371 aa).

Positions 4–368 constitute a Trm1 methyltransferase domain; sequence IEVTEGRTTF…APLDAIAAAL (365 aa). Arg41, Arg66, Asp82, Asp108, and Ala109 together coordinate S-adenosyl-L-methionine. Zn(2+)-binding residues include Cys237, Cys240, Cys256, and Cys259.

This sequence belongs to the class I-like SAM-binding methyltransferase superfamily. Trm1 family.

The catalysed reaction is guanosine(26) in tRNA + 2 S-adenosyl-L-methionine = N(2)-dimethylguanosine(26) in tRNA + 2 S-adenosyl-L-homocysteine + 2 H(+). Its function is as follows. Dimethylates a single guanine residue at position 26 of a number of tRNAs using S-adenosyl-L-methionine as donor of the methyl groups. This Methanosphaerula palustris (strain ATCC BAA-1556 / DSM 19958 / E1-9c) protein is tRNA (guanine(26)-N(2))-dimethyltransferase.